A 386-amino-acid polypeptide reads, in one-letter code: Uroporphyrinogen decarboxylase (386 aa).

The coproporphyrinogen I site is built by Arg-44, Ala-46, Arg-48, Arg-57, Asp-93, Tyr-170, Ser-225, and His-364. Arg-44, Ala-46, and Arg-48 together coordinate coproporphyrinogen III. Residues Asp-93, Tyr-170, Ser-225, and His-364 each contribute to the coproporphyrinogen III site.

Belongs to the uroporphyrinogen decarboxylase family. As to quaternary structure, homodimer.

It localises to the cytoplasm. The protein resides in the cytosol. It catalyses the reaction uroporphyrinogen III + 4 H(+) = coproporphyrinogen III + 4 CO2. It participates in porphyrin-containing compound metabolism; protoporphyrin-IX biosynthesis; coproporphyrinogen-III from 5-aminolevulinate: step 4/4. Catalyzes the decarboxylation of four acetate groups of uroporphyrinogen-III to yield coproporphyrinogen-III. This chain is Uroporphyrinogen decarboxylase, found in Drosophila virilis (Fruit fly).